A 218-amino-acid polypeptide reads, in one-letter code: Heart- and neural crest derivatives-expressed protein 1 (218 aa).

Disordered stretches follow at residues 1–23, 56–112, and 172–203; these read MNLVGSYAHHHHHHHHHHPHPAH, APDF…RTES, and ADGGRESKRKRELQQHEGFPPALGPGEKRIKG. Basic residues predominate over residues 8 to 21; that stretch reads AHHHHHHHHHHPHP. Low complexity predominate over residues 68–92; the sequence is AAAAAASYGPDARPGQSPGRLEALG. Residues 95 to 107 are compositionally biased toward basic residues; sequence LGRRKGSGPKKER. Residues 97 to 149 enclose the bHLH domain; sequence RRKGSGPKKERRRTESINSAFAELRECIPNVPADTKLSKIKTLRLATSYIAYL. Thr-110 carries the phosphothreonine; by PLK4 modification. Ser-112 is subject to Phosphoserine; by PLK4.

Efficient DNA binding requires dimerization with another bHLH protein. Forms homodimers and heterodimers with TCF3 gene products E12 and E47, HAND2 and HEY1, HEY2 and HEYL (hairy-related transcription factors). Interacts with MDFIC. Interacts with SOX15; the interaction enhances HAND1-induced differentiation of trophoblast giant cells. In terms of processing, phosphorylation by PLK4 disrupts the interaction with MDFIC and leads to translocation into the nucleoplasm, allowing dimerization and transcription factor activity.

It localises to the nucleus. The protein resides in the nucleoplasm. Its subcellular location is the nucleolus. In terms of biological role, transcription factor that plays an essential role in both trophoblast giant cell differentiation and in cardiac morphogenesis. Binds the DNA sequence 5'-NRTCTG-3' (non-canonical E-box). Acts as a transcriptional repressor of SOX15. In the adult, could be required for ongoing expression of cardiac-specific genes. This chain is Heart- and neural crest derivatives-expressed protein 1 (HAND1), found in Bos taurus (Bovine).